We begin with the raw amino-acid sequence, 258 residues long: Type II restriction enzyme HincII (258 aa).

It carries out the reaction Endonucleolytic cleavage of DNA to give specific double-stranded fragments with terminal 5'-phosphates.. Functionally, a P subtype restriction enzyme that recognizes the double-stranded sequence 5'-GTYRAC-3' and cleaves after Y-3. The chain is Type II restriction enzyme HincII (hincIIR) from Haemophilus influenzae.